A 242-amino-acid chain; its full sequence is Triosephosphate isomerase (242 aa).

8 to 10 (NWK) is a substrate binding site. Histidine 98 (electrophile) is an active-site residue. Glutamate 167 (proton acceptor) is an active-site residue. Substrate contacts are provided by residues glycine 173, serine 205, and 226 to 227 (GG).

The protein belongs to the triosephosphate isomerase family. As to quaternary structure, homodimer.

It localises to the cytoplasm. It catalyses the reaction D-glyceraldehyde 3-phosphate = dihydroxyacetone phosphate. Its pathway is carbohydrate biosynthesis; gluconeogenesis. It functions in the pathway carbohydrate degradation; glycolysis; D-glyceraldehyde 3-phosphate from glycerone phosphate: step 1/1. Involved in the gluconeogenesis. Catalyzes stereospecifically the conversion of dihydroxyacetone phosphate (DHAP) to D-glyceraldehyde-3-phosphate (G3P). The chain is Triosephosphate isomerase from Mesomycoplasma hyopneumoniae (strain 232) (Mycoplasma hyopneumoniae).